Consider the following 781-residue polypeptide: MAP7 domain-containing protein 2 (781 aa).

The span at 1-32 (MERSGGNGGGGGGGGGGGGGYGGSGGGGGGAG) shows a compositional bias: gly residues. Disordered regions lie at residues 1–37 (MERSGGNGGGGGGGGGGGGGYGGSGGGGGGAGVPSEG), 50–87 (AEAASGRASQSTPRSAGMDGFLKSDERQRLAKERREER), 120–567 (LEEQ…AAKQ), and 597–628 (TRKSDASLEVKKEDPKVELQPPPDVENKANKA). 2 stretches are compositionally biased toward basic and acidic residues: residues 71–87 (LKSDERQRLAKERREER) and 120–158 (LEEQRQREDQKRAAVEEKRKQKLREEEERLEAMMRRSLE). Residues 73 to 168 (SDERQRLAKE…RTQQLELKKK (96 aa)) are a coiled coil. Over residues 192–210 (LTLATSTPPLDTGTTTAAA) the composition is skewed to low complexity. 2 stretches are compositionally biased toward polar residues: residues 211–245 (ESTNACDKLSTSTMNLPKQTESPMSKHLSSSTVAI) and 257–267 (LKSSYKSSPTR). Basic and acidic residues predominate over residues 318–328 (RRCEPPEDISK). A compositionally biased stretch (polar residues) spans 329–348 (RLSSPVKSKITSKTYPQSPK). Composition is skewed to basic and acidic residues over residues 370–387 (ETPKKKAEKEKRNKEKEG), 397–436 (PREESLEKRMADKYATEKYVADKHATEKHSAPGGKAEHSA), 453–567 (LAEK…AAKQ), and 597–613 (TRKSDASLEVKKEDPKV).

The protein belongs to the MAP7 family. As to quaternary structure, interacts (via N-terminus) with microtubules; facilitates microtubule stabilization. Interacts with kinesin-1 family members, KIF5A, KIF5B and KIF5C. Expressed predominantly in the glomerular layer of the olfactory bulb and Sertoli cells of the testis.

It localises to the cytoplasm. The protein localises to the cytoskeleton. The protein resides in the microtubule organizing center. Its subcellular location is the centrosome. It is found in the midbody. It localises to the cell projection. The protein localises to the neuron projection. The protein resides in the axon. Its function is as follows. Microtubule-stabilizing protein involved in the control of cell motility and neurite outgrowth. Acts as a critical cofactor for kinesin transport; in the proximal axon regulates kinesin-1 family members, KIF5A, KIF5B and KIF5C recruitment to microtubules and contributes to kinesin-1-mediated transport in the axons. The polypeptide is MAP7 domain-containing protein 2 (Map7d2) (Mus musculus (Mouse)).